We begin with the raw amino-acid sequence, 344 residues long: Cytochrome c biogenesis protein CcsA (344 aa).

Helical transmembrane passes span 21 to 41 (NVAF…AAFP), 45 to 65 (LLSE…AALL), 80 to 100 (LYES…LALH), 106 to 126 (WVGV…ALAL), 151 to 171 (VMLL…AFLI), 252 to 272 (LIGL…VWAN), 287 to 307 (WALI…TKGW), and 313 to 333 (ALLA…VNFL).

It belongs to the CcmF/CycK/Ccl1/NrfE/CcsA family. May interact with ccs1.

The protein localises to the cellular thylakoid membrane. In terms of biological role, required during biogenesis of c-type cytochromes (cytochrome c6 and cytochrome f) at the step of heme attachment. In Synechococcus sp. (strain JA-3-3Ab) (Cyanobacteria bacterium Yellowstone A-Prime), this protein is Cytochrome c biogenesis protein CcsA.